A 456-amino-acid polypeptide reads, in one-letter code: Glycosyl hydrolase family 109 protein (456 aa).

Positions 1-31 form a signal peptide, tat-type signal; that stretch reads MKLNRRHFLKTAGLSAAGILTSQLPLSSAEA. NAD(+) is bound by residues 62 to 63, D84, 133 to 136, 153 to 154, and N182; these read QR, WEWH, and EV. Substrate-binding positions include Y211, R230, 242-245, and Y324; that span reads YPTH. Position 242 (Y242) interacts with NAD(+).

This sequence belongs to the Gfo/Idh/MocA family. Glycosyl hydrolase 109 subfamily. It depends on NAD(+) as a cofactor. In terms of processing, predicted to be exported by the Tat system. The position of the signal peptide cleavage has not been experimentally proven.

Functionally, glycosidase. In Shewanella pealeana (strain ATCC 700345 / ANG-SQ1), this protein is Glycosyl hydrolase family 109 protein.